A 1006-amino-acid polypeptide reads, in one-letter code: MKLYSIDFPLNESNNIFPNSSENININNNNINNSNPNNFINSNTDSELYGNYKPSSSNNFINNHHNNQSSDIHSISQSTPNLSTLISSSSNNNNNNNNNNSPNYSMNSSSDQAPNLLNMDSKLRWNQPFQNQQQQQPTSEVSTNSANTSSENTTCNNSPVSSSTNYIPNNSTSNVVLNSSIPTTSPNVLSAPNKKRQRDDIDCGNNNNINNNNINNNINNNNNNNNNNNNNNNNNNNNNNNGYIDPFYLRDDKDFNNNNNVQLDNTNISQFNDSKELNIKIKKDNNNNNINNINNINNNNNINNNINNNKNLQPQQIQQPQQPQQIQQIQQIQQIQQIQQTQPQQQQQQTQQQPQQQPQQLMSGNLKLPSIHHLEFEVEKNAKKDDSTNTNNNNNNNNNNNNNNNNNNNNIQQANVNTSPISTSTTPNNNNNNQIQNQPQQIPQQQAQQQAQQQAQQKKRKTKPSKYSITPSISLTPTTVTSSSSTNSSGSIGASPLSTSTNIPYSVTNNLSSNNLHSYMNPMGQDYSTSGMLSTTNPYTHHSPNTSSTVSSSVTSPLINQYGTNPTLTNNHSFYGSLASNQNTGASDGNNNNNNNNNNNNGGSGYFQSPVILSPFQKSSNPLNNNHNSNNVYNSSNSHNDINDYISLNSSSNNSYYNSNSGSGMTTPQSLGHSPSHNDYNSNNNNNNNNNNNSNNNNSNNSNSNNLTNKYDSNSSLSLLSSIGDNNNNNNNNNNNNNKSHSSSYYSSMSNNSNPSSSSSSSSSSSSSSSTLSSLNNNNKLSSNNGHIKYEPTSSSNYHDQMSQSHIYQNNFTYYDQSFPHPPVKKTHRRRPANIDKSTLYCHNCGTKNTPEWRRGPSGPATLCNACGLAYAKKQREEETNLHKLLLHSNSYSYHRGNMLESYVTPSLLPLFNTAANVPYLNTPNNASSSSSSSSSSSSSSSSSSSTSSYSSSSYNIPNTNTQYNTTSATSSFKPLTFSSLKTPENTRNTLNTNNNKINYSLNGSI.

A compositionally biased stretch (low complexity) spans 55-70; the sequence is SSSNNFINNHHNNQSS. Disordered stretches follow at residues 55–116, 128–248, 381–499, 528–638, and 657–800; these read SSSN…APNL, PFQN…DPFY, NAKK…PLST, STSG…SSNS, and YNSN…NYHD. The span at 71-86 shows a compositional bias: polar residues; it reads DIHSISQSTPNLSTLI. Composition is skewed to low complexity over residues 87 to 110 and 128 to 158; these read SSSS…NSSS and PFQN…CNNS. The segment covering 159–168 has biased composition (polar residues); the sequence is PVSSSTNYIP. The span at 169-180 shows a compositional bias: low complexity; that stretch reads NNSTSNVVLNSS. The span at 181–190 shows a compositional bias: polar residues; it reads IPTTSPNVLS. Low complexity-rich tracts occupy residues 205-241 and 388-410; these read NNNN…NNNN and TNTN…NNNN. Over residues 411–426 the composition is skewed to polar residues; that stretch reads IQQANVNTSPISTSTT. 2 stretches are compositionally biased toward low complexity: residues 427-456 and 468-496; these read PNNN…QQAQ and SITP…GASP. Polar residues predominate over residues 528 to 539; that stretch reads STSGMLSTTNPY. The segment covering 540–557 has biased composition (low complexity); it reads THHSPNTSSTVSSSVTSP. The span at 558–589 shows a compositional bias: polar residues; that stretch reads LINQYGTNPTLTNNHSFYGSLASNQNTGASDG. Low complexity-rich tracts occupy residues 590–601 and 619–638; these read NNNNNNNNNNNN and SSNP…SSNS. Positions 662 to 680 are enriched in polar residues; the sequence is GSGMTTPQSLGHSPSHNDY. 2 stretches are compositionally biased toward low complexity: residues 681–706 and 713–785; these read NSNN…NSNN and SNSS…SSNN. A GATA-type zinc finger spans residues 842 to 867; sequence CHNCGTKNTPEWRRGPSGPATLCNAC. The disordered stretch occupies residues 925–957; that stretch reads NNASSSSSSSSSSSSSSSSSSSTSSYSSSSYNI. Residues 928 to 954 show a composition bias toward low complexity; sequence SSSSSSSSSSSSSSSSSSSTSSYSSSS.

The chain is GATA zinc finger domain-containing protein 7 (gtaG) from Dictyostelium discoideum (Social amoeba).